Consider the following 230-residue polypeptide: Cytidylate kinase (230 aa).

An ATP-binding site is contributed by Gly-12–Thr-20.

The protein belongs to the cytidylate kinase family. Type 1 subfamily.

The protein resides in the cytoplasm. It carries out the reaction CMP + ATP = CDP + ADP. It catalyses the reaction dCMP + ATP = dCDP + ADP. This is Cytidylate kinase from Shewanella oneidensis (strain ATCC 700550 / JCM 31522 / CIP 106686 / LMG 19005 / NCIMB 14063 / MR-1).